Reading from the N-terminus, the 323-residue chain is Dehydrogenase/reductase SDR family member 7B (323 aa).

The Cytoplasmic segment spans residues 1-17; it reads MISPSFRKGMLKERVMD. The chain crosses the membrane as a helical; Signal-anchor for type II membrane protein span at residues 18-38; the sequence is LASQTTILPLLFGCLGIFSLF. Residues 39 to 323 lie on the Lumenal side of the membrane; that stretch reads RLLQRIRSKA…ARKERKSKSS (285 aa). NAD(+) is bound by residues Ser-62 and Leu-64. Ser-192 contacts substrate. Residues Tyr-205, Lys-209, and Thr-240 each contribute to the NAD(+) site. Catalysis depends on Tyr-205, which acts as the Proton acceptor.

It belongs to the short-chain dehydrogenases/reductases (SDR) family.

Its subcellular location is the endoplasmic reticulum membrane. Its function is as follows. Putative oxidoreductase. This chain is Dehydrogenase/reductase SDR family member 7B, found in Mus musculus (Mouse).